An 89-amino-acid polypeptide reads, in one-letter code: Class I hydrophobin D (89 aa).

Positions 1-16 are cleaved as a signal peptide; that stretch reads MKFSLATIALAAAVVA. Disulfide bonds link C28/C68, C39/C60, C40/C52, and C69/C85. N-linked (GlcNAc...) asparagine glycosylation is present at N36.

The protein belongs to the fungal hydrophobin family.

The protein localises to the secreted. It localises to the cell wall. It is found in the vacuole. Its subcellular location is the cytoplasmic vesicle. Its function is as follows. Aerial growth, conidiation, and dispersal of filamentous fungi in the environment rely upon a capability of their secreting small amphipathic proteins called hydrophobins (HPBs) with low sequence identity. Class I can self-assemble into an outermost layer of rodlet bundles on aerial cell surfaces, conferring cellular hydrophobicity that supports fungal growth, development and dispersal; whereas Class II form highly ordered films at water-air interfaces through intermolecular interactions but contribute nothing to the rodlet structure. Hyd1D contributes to certain cell wall-related features, such as hydrophobicity but is not involved in cell wall-related events during fungal proliferation in host hemocoel. Does not contribute to conidial hydrophobicity. Involved in insect hemocoel colonization independent of cell hydrophobicity. The protein is Class I hydrophobin D of Beauveria bassiana (strain ARSEF 2860) (White muscardine disease fungus).